A 132-amino-acid chain; its full sequence is Acyl carrier protein 3, chloroplastic (132 aa).

Residues 1–49 (MASIAGSAVSFAKPVKAINTNSLSFSGARRGNAFLRLQPVPMRFAVCCS) constitute a chloroplast transit peptide. A Carrier domain is found at 52–127 (QDTVEKVCEI…DAATLIDKLV (76 aa)). An O-(pantetheine 4'-phosphoryl)serine modification is found at Ser-87.

Belongs to the acyl carrier protein (ACP) family. In terms of processing, 4'-phosphopantetheine is transferred from CoA to a specific serine of apo-ACP by acpS. This modification is essential for activity because fatty acids are bound in thioester linkage to the sulfhydryl of the prosthetic group.

The protein resides in the plastid. It is found in the chloroplast. Its pathway is lipid metabolism; fatty acid biosynthesis. Functionally, carrier of the growing fatty acid chain in fatty acid biosynthesis. This Hordeum vulgare (Barley) protein is Acyl carrier protein 3, chloroplastic (ACL1.3).